Reading from the N-terminus, the 1058-residue chain is Carbamoyl phosphate synthase large chain (1058 aa).

The tract at residues 1–401 (MPKRKDIQKI…SLLKACRSLE (401 aa)) is carboxyphosphate synthetic domain. 12 residues coordinate ATP: arginine 129, arginine 169, glycine 175, glycine 176, arginine 208, isoleucine 210, glutamate 215, glycine 241, isoleucine 242, histidine 243, glutamine 284, and glutamate 298. Residues 133-327 (KQLMQELDQP…IAKLAAKIAV (195 aa)) enclose the ATP-grasp 1 domain. Residues glutamine 284, glutamate 298, and asparagine 300 each contribute to the Mg(2+) site. Residues glutamine 284, glutamate 298, and asparagine 300 each contribute to the Mn(2+) site. Residues 402–546 (IGVCHNEMTS…YSTYELENES (145 aa)) form an oligomerization domain region. The segment at 547–929 (VQSNKESILV…ALYKAFEANN (383 aa)) is carbamoyl phosphate synthetic domain. Residues 671-861 (EKALKELGIP…MAQIATKLIL (191 aa)) form the ATP-grasp 2 domain. The ATP site is built by arginine 707, serine 746, isoleucine 748, glutamate 752, glycine 777, valine 778, histidine 779, serine 780, glutamine 820, and glutamate 832. Mg(2+)-binding residues include glutamine 820, glutamate 832, and asparagine 834. Residues glutamine 820, glutamate 832, and asparagine 834 each coordinate Mn(2+). In terms of domain architecture, MGS-like spans 930–1058 (SHLSEFGQIV…ESRCFNIEAI (129 aa)). Residues 930-1058 (SHLSEFGQIV…ESRCFNIEAI (129 aa)) are allosteric domain.

This sequence belongs to the CarB family. As to quaternary structure, composed of two chains; the small (or glutamine) chain promotes the hydrolysis of glutamine to ammonia, which is used by the large (or ammonia) chain to synthesize carbamoyl phosphate. Tetramer of heterodimers (alpha,beta)4. Mg(2+) is required as a cofactor. It depends on Mn(2+) as a cofactor.

The catalysed reaction is hydrogencarbonate + L-glutamine + 2 ATP + H2O = carbamoyl phosphate + L-glutamate + 2 ADP + phosphate + 2 H(+). The enzyme catalyses hydrogencarbonate + NH4(+) + 2 ATP = carbamoyl phosphate + 2 ADP + phosphate + 2 H(+). The protein operates within amino-acid biosynthesis; L-arginine biosynthesis; carbamoyl phosphate from bicarbonate: step 1/1. It functions in the pathway pyrimidine metabolism; UMP biosynthesis via de novo pathway; (S)-dihydroorotate from bicarbonate: step 1/3. Its function is as follows. Large subunit of the glutamine-dependent carbamoyl phosphate synthetase (CPSase). CPSase catalyzes the formation of carbamoyl phosphate from the ammonia moiety of glutamine, carbonate, and phosphate donated by ATP, constituting the first step of 2 biosynthetic pathways, one leading to arginine and/or urea and the other to pyrimidine nucleotides. The large subunit (synthetase) binds the substrates ammonia (free or transferred from glutamine from the small subunit), hydrogencarbonate and ATP and carries out an ATP-coupled ligase reaction, activating hydrogencarbonate by forming carboxy phosphate which reacts with ammonia to form carbamoyl phosphate. This is Carbamoyl phosphate synthase large chain from Streptococcus pyogenes serotype M49 (strain NZ131).